We begin with the raw amino-acid sequence, 208 residues long: UPF0301 protein MAB_4928c (208 aa).

The protein belongs to the UPF0301 (AlgH) family.

The sequence is that of UPF0301 protein MAB_4928c from Mycobacteroides abscessus (strain ATCC 19977 / DSM 44196 / CCUG 20993 / CIP 104536 / JCM 13569 / NCTC 13031 / TMC 1543 / L948) (Mycobacterium abscessus).